A 448-amino-acid polypeptide reads, in one-letter code: Tubulin alpha-2 chain (448 aa).

GTP is bound by residues Gln11, Glu69, Ser138, Gly142, Thr143, Thr177, Asn204, and Asn226. Glu69 contacts Mg(2+). Glu252 is a catalytic residue. The tract at residues 428 to 448 (KDYEEVGADSNEGGEEEGEEY) is disordered. Acidic residues predominate over residues 429 to 448 (DYEEVGADSNEGGEEEGEEY).

This sequence belongs to the tubulin family. Dimer of alpha and beta chains. A typical microtubule is a hollow water-filled tube with an outer diameter of 25 nm and an inner diameter of 15 nM. Alpha-beta heterodimers associate head-to-tail to form protofilaments running lengthwise along the microtubule wall with the beta-tubulin subunit facing the microtubule plus end conferring a structural polarity. Microtubules usually have 13 protofilaments but different protofilament numbers can be found in some organisms and specialized cells. It depends on Mg(2+) as a cofactor. Post-translationally, undergoes a tyrosination/detyrosination cycle, the cyclic removal and re-addition of a C-terminal tyrosine residue. As to expression, expressed in intestine, pharyngeal muscle cells, and a subset of neurons.

It localises to the cytoplasm. The protein resides in the cytoskeleton. The catalysed reaction is GTP + H2O = GDP + phosphate + H(+). Functionally, tubulin is the major constituent of microtubules, a cylinder consisting of laterally associated linear protofilaments composed of alpha- and beta-tubulin heterodimers. Microtubules grow by the addition of GTP-tubulin dimers to the microtubule end, where a stabilizing cap forms. Below the cap, tubulin dimers are in GDP-bound state, owing to GTPase activity of alpha-tubulin. Required for the normal dynamic behavior of the non-centrosomal microtubules in the epidermal syncytium. Involved in the redistribution of microtubule end-binding protein EB1/ebp-2 caused by wounding. Required to modulate expression in the epidermis of antimicrobial peptides, such as nlp-29, after wounding, or fungal infection. This is Tubulin alpha-2 chain (tba-2) from Caenorhabditis elegans.